Reading from the N-terminus, the 183-residue chain is Holliday junction branch migration complex subunit RuvA (183 aa).

The domain I stretch occupies residues 1–63; that stretch reads MIVGLIGVVE…EDAHLLYGFL (63 aa). The interval 64–139 is domain II; it reads EEGEKILFER…FFIQDENRPA (76 aa). Position 139 (A139) is a region of interest, flexible linker. The segment at 139–183 is domain III; sequence ARNEVFLALESLGFKSAEINQVLKTLKPNLSIEAAIKEALQQLRS.

The protein belongs to the RuvA family. As to quaternary structure, homotetramer. Forms an RuvA(8)-RuvB(12)-Holliday junction (HJ) complex. HJ DNA is sandwiched between 2 RuvA tetramers; dsDNA enters through RuvA and exits via RuvB. An RuvB hexamer assembles on each DNA strand where it exits the tetramer. Each RuvB hexamer is contacted by two RuvA subunits (via domain III) on 2 adjacent RuvB subunits; this complex drives branch migration. In the full resolvosome a probable DNA-RuvA(4)-RuvB(12)-RuvC(2) complex forms which resolves the HJ.

The protein resides in the cytoplasm. The RuvA-RuvB-RuvC complex processes Holliday junction (HJ) DNA during genetic recombination and DNA repair, while the RuvA-RuvB complex plays an important role in the rescue of blocked DNA replication forks via replication fork reversal (RFR). RuvA specifically binds to HJ cruciform DNA, conferring on it an open structure. The RuvB hexamer acts as an ATP-dependent pump, pulling dsDNA into and through the RuvAB complex. HJ branch migration allows RuvC to scan DNA until it finds its consensus sequence, where it cleaves and resolves the cruciform DNA. The sequence is that of Holliday junction branch migration complex subunit RuvA from Helicobacter pylori (strain ATCC 700392 / 26695) (Campylobacter pylori).